Here is a 91-residue protein sequence, read N- to C-terminus: MPLHKSAEKRLRQSEKRNVRNRARKKELKVLLKNMQKLIDTSADKNVVEEAYRSAVQKLDRLGVKRYLHPNKASRKKAQLTKMLNNYVKVD.

A compositionally biased stretch (basic and acidic residues) spans 1 to 18; it reads MPLHKSAEKRLRQSEKRN. The disordered stretch occupies residues 1 to 24; the sequence is MPLHKSAEKRLRQSEKRNVRNRAR.

Belongs to the bacterial ribosomal protein bS20 family.

In terms of biological role, binds directly to 16S ribosomal RNA. The chain is Small ribosomal subunit protein bS20 from Chlorobium phaeobacteroides (strain DSM 266 / SMG 266 / 2430).